The following is a 456-amino-acid chain: 3-isopropylmalate dehydratase large subunit (456 aa).

3 residues coordinate [4Fe-4S] cluster: cysteine 336, cysteine 396, and cysteine 399.

This sequence belongs to the aconitase/IPM isomerase family. LeuC type 1 subfamily. Heterodimer of LeuC and LeuD. The cofactor is [4Fe-4S] cluster.

The enzyme catalyses (2R,3S)-3-isopropylmalate = (2S)-2-isopropylmalate. It functions in the pathway amino-acid biosynthesis; L-leucine biosynthesis; L-leucine from 3-methyl-2-oxobutanoate: step 2/4. Functionally, catalyzes the isomerization between 2-isopropylmalate and 3-isopropylmalate, via the formation of 2-isopropylmaleate. The protein is 3-isopropylmalate dehydratase large subunit of Staphylococcus epidermidis (strain ATCC 35984 / DSM 28319 / BCRC 17069 / CCUG 31568 / BM 3577 / RP62A).